We begin with the raw amino-acid sequence, 938 residues long: Leucine--tRNA ligase 1 (938 aa).

Positions 40–50 (PYTNSPLHIGH) match the 'HIGH' region motif. The 'KMSKS' region signature appears at 620–624 (KMSKS). K623 is an ATP binding site.

This sequence belongs to the class-I aminoacyl-tRNA synthetase family.

It localises to the cytoplasm. It catalyses the reaction tRNA(Leu) + L-leucine + ATP = L-leucyl-tRNA(Leu) + AMP + diphosphate. In Metallosphaera sedula (strain ATCC 51363 / DSM 5348 / JCM 9185 / NBRC 15509 / TH2), this protein is Leucine--tRNA ligase 1.